Reading from the N-terminus, the 111-residue chain is MIMTTTETIAGKQITEVKGLVTSSIVQSRHIGKDLLAGLKSVVGGELKSYTEMLEDSKKAVKERLIREAEQLGANAIVGLRFELTAGQNTSELIGYGTAVTAESIKKNKPL.

This sequence belongs to the UPF0145 family.

This chain is UPF0145 protein RBAM_010660, found in Bacillus velezensis (strain DSM 23117 / BGSC 10A6 / LMG 26770 / FZB42) (Bacillus amyloliquefaciens subsp. plantarum).